A 443-amino-acid polypeptide reads, in one-letter code: MSSLTNPNIFTVSRLNSEVRLLLENQLGIVWLVGEISNFSAPVSGHWYFTLKDSMAQVKCAMFRGNNRLVSFKPTNGNQVLVKARLSLYEPRGDYQLIIESMQPEGDGRLQQQFDALKMKLASEGLFAQSSKQAIPEHPKCVGIITSKTGAALYDILDVLKRRDPSLPVVIYPTLVQGEEAAIQIAQAIGRANSRNECDVLIVGRGGGSLEDLWCFNNEIVARTIAASQIPIISAVGHEIDVTIADFVADLRAPTPSAAAELVSRDNSHKDQALISREQKLRAAWRHYLTEQNRTIVSLSHRLEKQHPRYRLMRQTQQADELQIRLQRAMEKYLAQREQKVSRVQHKLQLLSPVRQISEQKNALARVEQKMMDAMDRKLLRLRHQIAIAAEKLDTVSPLATLKRGYSITQSESGEVITRQSQIKTGDTLVTRLSDGEIRSTVN.

It belongs to the XseA family. Heterooligomer composed of large and small subunits.

The protein resides in the cytoplasm. The enzyme catalyses Exonucleolytic cleavage in either 5'- to 3'- or 3'- to 5'-direction to yield nucleoside 5'-phosphates.. Bidirectionally degrades single-stranded DNA into large acid-insoluble oligonucleotides, which are then degraded further into small acid-soluble oligonucleotides. In Vibrio vulnificus (strain YJ016), this protein is Exodeoxyribonuclease 7 large subunit.